Reading from the N-terminus, the 848-residue chain is Neurofilament medium polypeptide (848 aa).

Polar residues predominate over residues 1-10; that stretch reads MSYTLDSLGN. Positions 1–51 are disordered; sequence MSYTLDSLGNPSAYRRVTETRSSFSRVSGSPSSGFRSQSWSRGSPSTVSSS. S2 carries the N-acetylserine modification. The head stretch occupies residues 2-102; that stretch reads SYTLDSLGNP…KLSRSNEKEQ (101 aa). Residues 21–44 are compositionally biased toward low complexity; sequence RSSFSRVSGSPSSGFRSQSWSRGS. A Phosphoserine modification is found at S30. Residue R42 is modified to Omega-N-methylarginine. T47 carries an O-linked (GlcNAc) threonine glycan. The residue at position 97 (S97) is a Phosphoserine. Positions 99 to 410 constitute an IF rod domain; sequence EKEQLQGLND…KLLEGEETRF (312 aa). The tract at residues 103–134 is coil 1A; the sequence is LQGLNDRFAGYIEKVHYLEQQNKEIEAEIQAL. The linker 1 stretch occupies residues 135 to 147; it reads RQKQASHAQLGDA. Residues 148–246 are coil 1B; it reads YDQEIRELRA…EEEVADLLAQ (99 aa). Phosphoserine is present on S224. The segment at 247-263 is linker 12; it reads IQASHITVERKDYLKTD. The coil 2A stretch occupies residues 264-285; it reads ISTALKEIRSQLECHSDQNMHQ. Residues 286-289 form a linker 2 region; the sequence is AEEW. The interval 290–410 is coil 2B; sequence FKCRYAKLTE…KLLEGEETRF (121 aa). Phosphotyrosine is present on Y318. S344, S416, and S428 each carry phosphoserine. The interval 411–848 is tail; the sequence is STFSGSITGP…AIVKEVTQGD (438 aa). T430 carries O-linked (GlcNAc) threonine glycosylation. Phosphoserine occurs at positions 466 and 482. The interval 482 to 785 is disordered; that stretch reads SAKEEKEEAE…GEDSSDDKVV (304 aa). Acidic residues predominate over residues 488 to 498; sequence EEAEEKEEEPE. Basic and acidic residues predominate over residues 499-509; sequence AEKSPVKSPEA. A phosphoserine mark is found at S502 and S506. The span at 510-533 shows a compositional bias: acidic residues; sequence KEEEEEGEKEEEEEGQEEEEEEDE. Positions 534 to 553 are enriched in basic and acidic residues; that stretch reads GVKSDQAEEGGSEKEGSSEK. S537, S545, S550, and S551 each carry phosphoserine. Residues 554–576 are compositionally biased toward acidic residues; that stretch reads DEGEQEEEEGETEAEGEGEEAEA. T565 carries the phosphothreonine modification. Basic and acidic residues predominate over residues 577–604; that stretch reads KEEKKIEGKVEEVAVKEEIKVEKPEKAK. Phosphoserine occurs at positions 605 and 610. Composition is skewed to basic and acidic residues over residues 611–677 and 689–711; these read PVEE…KAVE and SLEKDTKEEKPQPQEKVKEKAEE. At T642 the chain carries Phosphothreonine. A phosphoserine mark is found at S645, S669, S689, S715, S723, S753, and S769. 2 stretches are compositionally biased toward basic and acidic residues: residues 720–732 and 748–760; these read SDRSPQESKKEDI and TQEKGSGREEEKG. Over residues 771 to 785 the composition is skewed to basic and acidic residues; it reads AEEKKGEDSSDDKVV.

The protein belongs to the intermediate filament family. As to quaternary structure, forms heterodimers with NEFL; which can further hetero-oligomerize (in vitro). Forms heterodimers with INA (in vitro). There are a number of repeats of the tripeptide K-S-P, NFM is phosphorylated on a number of the serines in this motif. It is thought that phosphorylation of NFM results in the formation of interfilament cross bridges that are important in the maintenance of axonal caliber. In terms of processing, phosphorylation seems to play a major role in the functioning of the larger neurofilament polypeptides (NF-M and NF-H), the levels of phosphorylation being altered developmentally and coincidentally with a change in the neurofilament function. Post-translationally, phosphorylated in the head and rod regions by the PKC kinase PKN1, leading to the inhibition of polymerization. As to expression, expressed in the sciatic nerve (at protein level).

The protein resides in the cytoplasm. It localises to the cytoskeleton. It is found in the cell projection. Its subcellular location is the axon. In terms of biological role, neurofilaments usually contain three intermediate filament proteins: NEFL, NEFM, and NEFH which are involved in the maintenance of neuronal caliber. May additionally cooperate with the neuronal intermediate filament proteins PRPH and INA to form neuronal filamentous networks. This chain is Neurofilament medium polypeptide (Nefm), found in Mus musculus (Mouse).